The primary structure comprises 410 residues: Peptidase T (410 aa).

The disordered stretch occupies residues 11–30; sequence RYAEIDTQSDPDSESTPSTE. Position 78 (H78) interacts with Zn(2+). The active site involves D80. D140 is a Zn(2+) binding site. E174 serves as the catalytic Proton acceptor. E175, D197, and H379 together coordinate Zn(2+).

Belongs to the peptidase M20B family. Zn(2+) serves as cofactor.

It localises to the cytoplasm. It carries out the reaction Release of the N-terminal residue from a tripeptide.. Its function is as follows. Cleaves the N-terminal amino acid of tripeptides. The polypeptide is Peptidase T (Staphylococcus carnosus (strain TM300)).